Here is a 712-residue protein sequence, read N- to C-terminus: Capsid protein (712 aa).

2 disordered regions span residues 614–633 and 646–665; these read LTST…KEVR and CWMS…PESS. A coiled-coil region spans residues 670–706; sequence YDNHTKLAKRVKKEIHNQNRRHRLLLAHLRRERDRLL.

This sequence belongs to the anelloviridae capsid protein family.

Its subcellular location is the virion. Its function is as follows. Self-assembles to form an icosahedral capsid with a T=1 symmetry, about 30 nm in diameter, and consisting of 60 capsid proteins. The capsid encapsulates the genomic DNA. Capsid protein is involved in attachment and entry into the host cell. This is Capsid protein from Torque teno tamarin virus (isolate So-TTV2).